Reading from the N-terminus, the 314-residue chain is MDLDGKVQPPSAQVGQQPLSPDAALHEPRLLQESGIAARVAVLAAPVLADLGLRLVRVKISGQNGTTVQIMAERPDGTMDVEACESVSEALSPVLDVEDPVKQAYHLEISSPGIDRPLVRLSDFERALGQEVRVELKTGLAGRKRFRGTIGPIEASSPIGGSKGALRLTRTDAKPEEETEVLLPLDDLHEARLVLTEDLIRQALRAAKAAREGDDGNNEEQDEEQEEPAPPRRGPGRFAPRHKTQNPEHNPAQNPISARAKPLVPAGVRTEFKKSKTGERGPAQKPHLASQAARKSDTGSSRSGHDMPRKPAPK.

Disordered regions lie at residues 1 to 20 (MDLDGKVQPPSAQVGQQPLS), 152 to 176 (PIEASSPIGGSKGALRLTRTDAKPE), and 206 to 314 (AAKA…PAPK). Polar residues predominate over residues 10-19 (PSAQVGQQPL). Residues 215–227 (DGNNEEQDEEQEE) show a composition bias toward acidic residues. Residues 247-256 (PEHNPAQNPI) show a composition bias toward polar residues. Composition is skewed to basic and acidic residues over residues 270–279 (TEFKKSKTGE) and 303–314 (SGHDMPRKPAPK).

It belongs to the RimP family.

It localises to the cytoplasm. Functionally, required for maturation of 30S ribosomal subunits. This is Ribosome maturation factor RimP from Beijerinckia indica subsp. indica (strain ATCC 9039 / DSM 1715 / NCIMB 8712).